Consider the following 276-residue polypeptide: Large ribosomal subunit protein uL2 (276 aa).

The disordered stretch occupies residues 218–255; it reads PTVRGSAMNPCDHPHGGGEGRTPIGMSSPVTPWGKPAL.

It belongs to the universal ribosomal protein uL2 family. Part of the 50S ribosomal subunit. Forms a bridge to the 30S subunit in the 70S ribosome.

Its function is as follows. One of the primary rRNA binding proteins. Required for association of the 30S and 50S subunits to form the 70S ribosome, for tRNA binding and peptide bond formation. It has been suggested to have peptidyltransferase activity; this is somewhat controversial. Makes several contacts with the 16S rRNA in the 70S ribosome. This chain is Large ribosomal subunit protein uL2, found in Clostridium tetani (strain Massachusetts / E88).